The primary structure comprises 944 residues: LPS-assembly protein LptD (944 aa).

The first 33 residues, 1-33 (MALKSPAFRRKFPLLVTGGLLALQPLATSFVVA), serve as a signal peptide directing secretion. The tract at residues 52–102 (KATGNLPPRPVHPGAAAASSGAEAPGEVGEAQAEKPMLVTESKGRGLKSRS) is disordered. Positions 64–82 (PGAAAASSGAEAPGEVGEA) are enriched in low complexity.

This sequence belongs to the LptD family. Component of the lipopolysaccharide transport and assembly complex. Interacts with LptE and LptA.

It localises to the cell outer membrane. Functionally, together with LptE, is involved in the assembly of lipopolysaccharide (LPS) at the surface of the outer membrane. This chain is LPS-assembly protein LptD, found in Pseudomonas entomophila (strain L48).